Consider the following 221-residue polypeptide: GTP cyclohydrolase 1 (221 aa).

The Zn(2+) site is built by C109, H112, and C180.

The protein belongs to the GTP cyclohydrolase I family. Toroid-shaped homodecamer, composed of two pentamers of five dimers.

The catalysed reaction is GTP + H2O = 7,8-dihydroneopterin 3'-triphosphate + formate + H(+). The protein operates within cofactor biosynthesis; 7,8-dihydroneopterin triphosphate biosynthesis; 7,8-dihydroneopterin triphosphate from GTP: step 1/1. This Blochmanniella pennsylvanica (strain BPEN) protein is GTP cyclohydrolase 1.